A 123-amino-acid polypeptide reads, in one-letter code: uncharacterized protein (123 aa).

The interval 35 to 100 is disordered; that stretch reads SQDHGDDPAE…SSGAPASQHC (66 aa). Positions 37–48 are enriched in basic and acidic residues; it reads DHGDDPAERGRT. The segment covering 85–97 has biased composition (low complexity); the sequence is ALPASPSSGAPAS.

This is an uncharacterized protein from Homo sapiens (Human).